The chain runs to 755 residues: Photosystem I P700 chlorophyll a apoprotein A1 (755 aa).

8 helical membrane-spanning segments follow: residues 72–95 (IFSA…YHGA), 158–181 (LLCT…FHYH), 197–221 (LNHH…HVAI), 297–315 (QAHH…GHMY), 352–375 (WHAQ…QHMY), 391–417 (ISLF…IYMV), 439–461 (AIIS…FYVH), and 536–554 (FMVH…LILL). The [4Fe-4S] cluster site is built by Cys-578 and Cys-587. 2 helical membrane passes run 594–615 (HVFL…HFSW) and 669–691 (LSAY…MFLF). Chlorophyll a' is bound at residue His-680. Residues Met-688 and Tyr-696 each contribute to the chlorophyll a site. Trp-697 contacts phylloquinone. The helical transmembrane segment at 729–749 (AVGVAHYLLGGIVTTWAFFLA) threads the bilayer.

This sequence belongs to the PsaA/PsaB family. In terms of assembly, the PsaA/B heterodimer binds the P700 chlorophyll special pair and subsequent electron acceptors. PSI consists of a core antenna complex that captures photons, and an electron transfer chain that converts photonic excitation into a charge separation. The cyanobacterial PSI reaction center is composed of one copy each of PsaA,B,C,D,E,F,I,J,K,L,M and X, and forms trimeric complexes. PSI electron transfer chain: 5 chlorophyll a, 1 chlorophyll a', 2 phylloquinones and 3 4Fe-4S clusters. PSI core antenna: 90 chlorophyll a, 22 carotenoids, 3 phospholipids and 1 galactolipid. P700 is a chlorophyll a/chlorophyll a' dimer, A0 is one or more chlorophyll a, A1 is one or both phylloquinones and FX is a shared 4Fe-4S iron-sulfur center. serves as cofactor.

The protein resides in the cellular thylakoid membrane. The catalysed reaction is reduced [plastocyanin] + hnu + oxidized [2Fe-2S]-[ferredoxin] = oxidized [plastocyanin] + reduced [2Fe-2S]-[ferredoxin]. In terms of biological role, psaA and PsaB bind P700, the primary electron donor of photosystem I (PSI), as well as the electron acceptors A0, A1 and FX. PSI is a plastocyanin/cytochrome c6-ferredoxin oxidoreductase, converting photonic excitation into a charge separation, which transfers an electron from the donor P700 chlorophyll pair to the spectroscopically characterized acceptors A0, A1, FX, FA and FB in turn. Oxidized P700 is reduced on the lumenal side of the thylakoid membrane by plastocyanin or cytochrome c6. The chain is Photosystem I P700 chlorophyll a apoprotein A1 from Synechococcus sp. (strain JA-3-3Ab) (Cyanobacteria bacterium Yellowstone A-Prime).